A 732-amino-acid chain; its full sequence is Copper-transporting ATPase (732 aa).

The Cytoplasmic segment spans residues 1-88; it reads MTKAQFYIEG…NPSFLTPNVK (88 aa). One can recognise an HMA domain in the interval 2–68; sequence TKAQFYIEGM…QIEKLGYQPR (67 aa). Cu(+) contacts are provided by cysteine 13 and cysteine 16. A helical transmembrane segment spans residues 89 to 109; sequence LALVLLGTLGVLALSMFAPLL. At 110-122 the chain is on the extracellular side; sequence PLPSFLKNPFING. A helical transmembrane segment spans residues 123–142; that stretch reads IVQLVLSLMVMHMGRNFYVH. Over 143–149 the chain is Cytoplasmic; it reads GFKALWA. A helical transmembrane segment spans residues 150–170; that stretch reads RQPNMDSLIALGTSAALLYSL. Over 171–187 the chain is Extracellular; the sequence is VLLFRAYTHAPIEGYYF. The chain crosses the membrane as a helical span at residues 188-208; it reads ESVCVILLFVMAGKRVEENSK. At 209 to 336 the chain is on the cytoplasmic side; the sequence is DKALEAMQSL…KAPIARLADK (128 aa). The chain crosses the membrane as a helical span at residues 337 to 359; the sequence is VAGVFVPIVIGIASIAFLVWLVL. The Extracellular segment spans residues 360 to 365; that stretch reads GDFTRA. The chain crosses the membrane as a helical span at residues 366 to 383; it reads LEVFIAILVISCPCALGL. Residues 384–663 lie on the Cytoplasmic side of the membrane; the sequence is ATPMALLVAQ…KLSALTIANI (280 aa). Aspartate 421 (4-aspartylphosphate intermediate) is an active-site residue. Mg(2+)-binding residues include aspartate 609 and aspartate 613. The chain crosses the membrane as a helical span at residues 664 to 683; it reads KQNLFWAFCYNSIAIPLACG. Residues 684 to 694 lie on the Extracellular side of the membrane; that stretch reads VAYKLGIMFNP. The helical transmembrane segment at 695–713 threads the bilayer; the sequence is MLASLAMSLSSVSVVLNAQ. The Cytoplasmic segment spans residues 714-732; the sequence is RLRGAHFKIRGSHENRHSS.

It belongs to the cation transport ATPase (P-type) (TC 3.A.3) family. Type IB subfamily.

Its subcellular location is the cell membrane. It carries out the reaction Cu(+)(in) + ATP + H2O = Cu(+)(out) + ADP + phosphate + H(+). Functionally, probably involved in copper export. This is Copper-transporting ATPase (copA) from Helicobacter felis (strain ATCC 49179 / CCUG 28539 / NCTC 12436 / CS1).